The following is a 551-amino-acid chain: Arginine--tRNA ligase (551 aa).

The 'HIGH' region motif lies at 125–135 (ANPTGPLHIGH).

The protein belongs to the class-I aminoacyl-tRNA synthetase family. In terms of assembly, monomer.

It is found in the cytoplasm. It catalyses the reaction tRNA(Arg) + L-arginine + ATP = L-arginyl-tRNA(Arg) + AMP + diphosphate. In Oleidesulfovibrio alaskensis (strain ATCC BAA-1058 / DSM 17464 / G20) (Desulfovibrio alaskensis), this protein is Arginine--tRNA ligase.